We begin with the raw amino-acid sequence, 154 residues long: SsrA-binding protein (154 aa).

This sequence belongs to the SmpB family.

The protein localises to the cytoplasm. Its function is as follows. Required for rescue of stalled ribosomes mediated by trans-translation. Binds to transfer-messenger RNA (tmRNA), required for stable association of tmRNA with ribosomes. tmRNA and SmpB together mimic tRNA shape, replacing the anticodon stem-loop with SmpB. tmRNA is encoded by the ssrA gene; the 2 termini fold to resemble tRNA(Ala) and it encodes a 'tag peptide', a short internal open reading frame. During trans-translation Ala-aminoacylated tmRNA acts like a tRNA, entering the A-site of stalled ribosomes, displacing the stalled mRNA. The ribosome then switches to translate the ORF on the tmRNA; the nascent peptide is terminated with the 'tag peptide' encoded by the tmRNA and targeted for degradation. The ribosome is freed to recommence translation, which seems to be the essential function of trans-translation. The sequence is that of SsrA-binding protein from Enterococcus hirae (strain ATCC 9790 / DSM 20160 / JCM 8729 / LMG 6399 / NBRC 3181 / NCIMB 6459 / NCDO 1258 / NCTC 12367 / WDCM 00089 / R).